We begin with the raw amino-acid sequence, 460 residues long: Probable Xaa-Pro aminopeptidase VDBG_02538 (460 aa).

4 residues coordinate Mn(2+): Asp256, Asp267, Glu390, and Glu430.

This sequence belongs to the peptidase M24B family. Requires Mn(2+) as cofactor.

The catalysed reaction is Release of any N-terminal amino acid, including proline, that is linked to proline, even from a dipeptide or tripeptide.. In terms of biological role, catalyzes the removal of a penultimate prolyl residue from the N-termini of peptides. The protein is Probable Xaa-Pro aminopeptidase VDBG_02538 of Verticillium alfalfae (strain VaMs.102 / ATCC MYA-4576 / FGSC 10136) (Verticillium wilt of alfalfa).